A 334-amino-acid polypeptide reads, in one-letter code: Ornithine carbamoyltransferase (334 aa).

Residues 57-60 (STRT), R108, and 135-138 (HPTQ) each bind carbamoyl phosphate. L-ornithine contacts are provided by residues N168, D232, and 236–237 (SM). Carbamoyl phosphate is bound by residues 274 to 275 (CL) and R321.

The protein belongs to the aspartate/ornithine carbamoyltransferase superfamily. OTCase family.

The protein resides in the cytoplasm. It catalyses the reaction carbamoyl phosphate + L-ornithine = L-citrulline + phosphate + H(+). Its pathway is amino-acid biosynthesis; L-arginine biosynthesis; L-arginine from L-ornithine and carbamoyl phosphate: step 1/3. In terms of biological role, reversibly catalyzes the transfer of the carbamoyl group from carbamoyl phosphate (CP) to the N(epsilon) atom of ornithine (ORN) to produce L-citrulline. This is Ornithine carbamoyltransferase from Cutibacterium acnes (strain DSM 16379 / KPA171202) (Propionibacterium acnes).